The sequence spans 555 residues: Suppressor of tumorigenicity 7 protein-like (555 aa).

Helical transmembrane passes span 36–56 (GLAG…LYAL) and 80–100 (FYVA…IFEW). Positions 126–148 (TESSISEPGSPSNNRESETSRQN) are disordered.

The protein belongs to the ST7 family.

Its subcellular location is the membrane. This chain is Suppressor of tumorigenicity 7 protein-like (ST7L), found in Bos taurus (Bovine).